The following is a 382-amino-acid chain: Proton extrusion protein PxcA (382 aa).

Helical transmembrane passes span 156–176 (TLIS…VQQI), 257–277 (AIKN…VCII), 305–325 (IILF…QVLL), and 340–360 (FILL…KYWI).

The protein belongs to the CemA family.

The protein resides in the cell inner membrane. In terms of biological role, required for H(+) efflux immediately after light irradiation to form a rapid H(+) concentration gradient across the thylakoid membranes. Together with PxcL, contributes to transient H(+) uptake following dark to light transition. The sequence is that of Proton extrusion protein PxcA from Prochlorococcus marinus (strain MIT 9313).